The following is a 727-amino-acid chain: DNA topoisomerase 3 (727 aa).

The Toprim domain maps to 3 to 136; sequence KTVVLAEKPS…LKRLWISSVT (134 aa). Residues glutamate 9 and aspartate 105 each coordinate Mg(2+). The Topo IA-type catalytic domain occupies 153-592; sequence FENLYHSAVA…EMKEYAKQTI (440 aa). An interaction with DNA region spans residues 187–192; sequence SCGRVQ. The O-(5'-phospho-DNA)-tyrosine intermediate role is filled by tyrosine 310. Basic and acidic residues predominate over residues 685–711; it reads RRAKDKNSKASKRDVHSYMKKQNKDEP. The segment at 685–713 is disordered; sequence RRAKDKNSKASKRDVHSYMKKQNKDEPIN.

Belongs to the type IA topoisomerase family. The cofactor is Mg(2+).

It carries out the reaction ATP-independent breakage of single-stranded DNA, followed by passage and rejoining.. Its function is as follows. Releases the supercoiling and torsional tension of DNA, which is introduced during the DNA replication and transcription, by transiently cleaving and rejoining one strand of the DNA duplex. Introduces a single-strand break via transesterification at a target site in duplex DNA. The scissile phosphodiester is attacked by the catalytic tyrosine of the enzyme, resulting in the formation of a DNA-(5'-phosphotyrosyl)-enzyme intermediate and the expulsion of a 3'-OH DNA strand. The free DNA strand then undergoes passage around the unbroken strand, thus removing DNA supercoils. Finally, in the religation step, the DNA 3'-OH attacks the covalent intermediate to expel the active-site tyrosine and restore the DNA phosphodiester backbone. The chain is DNA topoisomerase 3 from Bacillus licheniformis (strain ATCC 14580 / DSM 13 / JCM 2505 / CCUG 7422 / NBRC 12200 / NCIMB 9375 / NCTC 10341 / NRRL NRS-1264 / Gibson 46).